Here is a 326-residue protein sequence, read N- to C-terminus: Myeloid protein 1 (326 aa).

The signal sequence occupies residues 1 to 18 (MPALSLIALLSLVSTAFA). 2 consecutive repeat copies span residues 28 to 162 (QQGR…SDPT) and 177 to 312 (QQDA…SDPT). 3 disulfides stabilise this stretch: Cys-37-Cys-74, Cys-48-Cys-53, and Cys-113-Cys-156. Positions 67, 71, and 152 each coordinate Zn(2+). Residues 307 to 326 (DRSDPTSNLERGKGESEMEV) form a disordered region.

The protein belongs to the LECT2/MIM-1 family. In terms of processing, substrate for arginine-specific ADP-ribosyltransferase.

It is found in the cytoplasmic granule. This is Myeloid protein 1 (MIM1) from Gallus gallus (Chicken).